The primary structure comprises 518 residues: Coiled-coil domain-containing protein 82 (518 aa).

Residues 1–14 (MVHVRRHETRKNSK) show a composition bias toward basic residues. Residues 1–266 (MVHVRRHETR…EDDYRYDEDG (266 aa)) are disordered. Residues 16-27 (QKPEQKSRVDWH) are compositionally biased toward basic and acidic residues. Acidic residues predominate over residues 38 to 67 (DSDEELDSNEELDSDEEHDSGESIDSDEEL). A compositionally biased stretch (basic and acidic residues) spans 68-89 (DISKKSDINELPEKETELKLIK). Over residues 92-107 (SQGSNSKHLTNTSNSS) the composition is skewed to polar residues. Residues 111-127 (EQLKETKHNDLPDDEAH) are compositionally biased toward basic and acidic residues. Residues Ser-170 and Ser-194 each carry the phosphoserine modification. The span at 191 to 201 (DECSSLEMEQE) shows a compositional bias: acidic residues. Phosphothreonine is present on Thr-202. A coiled-coil region spans residues 204–232 (EKSSAARKREYHQKLQELSERSRQRRRRN). Basic and acidic residues predominate over residues 215–225 (HQKLQELSERS). Residues 249–266 (GEEDEDEDEDDYRYDEDG) are compositionally biased toward acidic residues. Ser-305 carries the post-translational modification Phosphoserine.

This chain is Coiled-coil domain-containing protein 82 (Ccdc82), found in Mus musculus (Mouse).